An 83-amino-acid chain; its full sequence is Putative beta-neurotoxin RjAa15f (83 aa).

The N-terminal stretch at 1–18 (MKILIFIIASFMLIGVEC) is a signal peptide. The 64-residue stretch at 19 to 82 (KEGYPMGRNG…VWDSSNNKCV (64 aa)) folds into the LCN-type CS-alpha/beta domain. 4 disulfide bridges follow: cysteine 29–cysteine 81, cysteine 33–cysteine 55, cysteine 40–cysteine 62, and cysteine 44–cysteine 64.

It belongs to the long (4 C-C) scorpion toxin superfamily. Sodium channel inhibitor family. Beta subfamily. As to expression, expressed by the venom gland.

The protein resides in the secreted. In terms of biological role, beta toxins bind voltage-independently at site-4 of sodium channels (Nav) and shift the voltage of activation toward more negative potentials thereby affecting sodium channel activation and promoting spontaneous and repetitive firing. The polypeptide is Putative beta-neurotoxin RjAa15f (Rhopalurus junceus (Caribbean blue scorpion)).